The chain runs to 299 residues: Zeta-sarcoglycan (299 aa).

At 1-37 the chain is on the cytoplasmic side; the sequence is MTREQYILATQQNNLPRTENAQLYPVGIYGWRKRCLY. Residues 38–58 form a helical; Signal-anchor for type II membrane protein membrane-spanning segment; that stretch reads FFVLLLLVTMIVNLAMTIWIL. Residues 59-299 are Extracellular-facing; the sequence is KVMNFTVDGM…QSSSNICLWS (241 aa). 2 N-linked (GlcNAc...) asparagine glycosylation sites follow: N62 and N110. The cysteines at positions 273 and 289 are disulfide-linked.

Belongs to the sarcoglycan beta/delta/gamma/zeta family.

The protein localises to the cell membrane. Its subcellular location is the sarcolemma. It localises to the cytoplasm. The protein resides in the cytoskeleton. In terms of biological role, component of the sarcoglycan complex, a subcomplex of the dystrophin-glycoprotein complex which forms a link between the F-actin cytoskeleton and the extracellular matrix. May play a role in the maintenance of striated muscle membrane stability. The chain is Zeta-sarcoglycan (SGCZ) from Homo sapiens (Human).